Consider the following 336-residue polypeptide: Holliday junction branch migration complex subunit RuvB (336 aa).

Positions 1 to 181 (MDRIVEIEKV…FGMDFRLQFY (181 aa)) are large ATPase domain (RuvB-L). ATP contacts are provided by residues Leu20, Arg21, Gly62, Lys65, Thr66, Thr67, 128–130 (EDF), Arg171, Tyr181, and Arg218. Thr66 contacts Mg(2+). The small ATPAse domain (RuvB-S) stretch occupies residues 182–252 (TSSELSRIVQ…RAKEGLNALG (71 aa)). The interval 255-336 (SLGFDEMDIR…KIDIEKGLFE (82 aa)) is head domain (RuvB-H). Residues Arg309 and Arg314 each contribute to the DNA site.

This sequence belongs to the RuvB family. As to quaternary structure, homohexamer. Forms an RuvA(8)-RuvB(12)-Holliday junction (HJ) complex. HJ DNA is sandwiched between 2 RuvA tetramers; dsDNA enters through RuvA and exits via RuvB. An RuvB hexamer assembles on each DNA strand where it exits the tetramer. Each RuvB hexamer is contacted by two RuvA subunits (via domain III) on 2 adjacent RuvB subunits; this complex drives branch migration. In the full resolvosome a probable DNA-RuvA(4)-RuvB(12)-RuvC(2) complex forms which resolves the HJ.

It is found in the cytoplasm. It catalyses the reaction ATP + H2O = ADP + phosphate + H(+). The RuvA-RuvB-RuvC complex processes Holliday junction (HJ) DNA during genetic recombination and DNA repair, while the RuvA-RuvB complex plays an important role in the rescue of blocked DNA replication forks via replication fork reversal (RFR). RuvA specifically binds to HJ cruciform DNA, conferring on it an open structure. The RuvB hexamer acts as an ATP-dependent pump, pulling dsDNA into and through the RuvAB complex. RuvB forms 2 homohexamers on either side of HJ DNA bound by 1 or 2 RuvA tetramers; 4 subunits per hexamer contact DNA at a time. Coordinated motions by a converter formed by DNA-disengaged RuvB subunits stimulates ATP hydrolysis and nucleotide exchange. Immobilization of the converter enables RuvB to convert the ATP-contained energy into a lever motion, pulling 2 nucleotides of DNA out of the RuvA tetramer per ATP hydrolyzed, thus driving DNA branch migration. The RuvB motors rotate together with the DNA substrate, which together with the progressing nucleotide cycle form the mechanistic basis for DNA recombination by continuous HJ branch migration. Branch migration allows RuvC to scan DNA until it finds its consensus sequence, where it cleaves and resolves cruciform DNA. In Campylobacter concisus (strain 13826), this protein is Holliday junction branch migration complex subunit RuvB.